The primary structure comprises 622 residues: MPPTQAESVIKNIIREIGQECAAHGEIASETVVAFMVKAVVLDPSNGFNMDRTLIKTDVQKLVKLCVARLLDNKNPSLDTIKMQVYFDMNYTSREDFLEEHHRVLESRLGIVSREITDNRASAREELENLYRKIVSYVLLRSGLGSPTDIKIVREATAALQSVFPQAELATFLTLSKKDKERQLKELTMIVTGIRLFNRDCGKGGEGIDDLPAILHEAIPTTTQHIDSQLQIAQDQAFRYTAILEKVTNNPLMAKELQPYMLKEALYNVRQYEIFLQTVLSDIITCAEEVEMMIKQLAAQLEQLKMAVKSKTAVPTSQVFPIFVALASLWMSFQDETVLISVLSNLTTNLELFLGTHELLFPEKVMLGLLDGVVVKSDLTRIEEHMEERVELADFRTQEWLFPETTANFNKLLIQYRGFCGYTFAVTDGLLLPGNPAIGILKYKEKYYTFSTRDAAYTFAENPDHYIHLIKEKAKKNAELIQLLELHQQFETLIPYSQMRDVDKHYIKPITKCDNGTQTDTHILPPTTMRTYEWNEWELRRKAIKLANLRQKITHSVQTDLSHMRRDNTSQVYPLKEASTQSKREGSSRVPRPQIFIAGLRGGQSKTTYGVKVNLTRAVDET.

The interval 568–593 (NTSQVYPLKEASTQSKREGSSRVPRP) is disordered.

Belongs to the CFAP206 family. Expressed in the sperm, oviduct, lung, nasal cavity, brain ependyma and choroid plexus.

It is found in the cytoplasm. The protein resides in the cytoskeleton. It localises to the cilium axoneme. Its subcellular location is the cilium basal body. Its function is as follows. Essential for sperm motility and is involved in the regulation of the beating frequency of motile cilia on the epithelial cells of the respiratory tract. Required for the establishment of radial spokes in sperm flagella. In Mus musculus (Mouse), this protein is Cilia- and flagella-associated protein 206.